Reading from the N-terminus, the 512-residue chain is Mucin-13 (512 aa).

Residues 1–18 form the signal peptide; that stretch reads MKAIIHLTLLALLSVNTA. Residues 19-421 are Extracellular-facing; the sequence is TNQGNSADAV…GLDCKDKFQL (403 aa). Polar residues predominate over residues 22-38; sequence GNSADAVTTTETATSGP. Disordered regions lie at residues 22 to 67 and 133 to 176; these read GNSA…PTAT and MVPS…PSNP. The segment covering 53–67 has biased composition (low complexity); it reads TASTTANTPSFPTAT. Polar residues predominate over residues 135 to 176; it reads PSETQSNNEMSPTTEDNQSSGPPTGTALLETSTLNSTGPSNP. Residues Asn-151 and Asn-169 are each glycosylated (N-linked (GlcNAc...) asparagine). Residues 173 to 211 form the EGF-like 1 domain; it reads PSNPCQDDPCADNSLCVKLHNTSFCLCLEGYYYNSSTCK. Cystine bridges form between Cys-177-Cys-188, Cys-182-Cys-197, and Cys-199-Cys-210. 4 N-linked (GlcNAc...) asparagine glycosylation sites follow: Asn-193, Asn-206, Asn-284, and Asn-332. Residues 212-336 enclose the SEA domain; the sequence is KGKVFPGKIS…DYYGCNQTAD (125 aa). EGF-like domains lie at 322–361 and 363–404; these read LTLRCDYYGCNQTADDCLNGLACDCKSDLQRPNPQSPFCV and SSLK…GNCQ. 6 disulfide bridges follow: Cys-326/Cys-338, Cys-331/Cys-344, Cys-346/Cys-360, Cys-367/Cys-378, Cys-371/Cys-389, and Cys-391/Cys-403. Residues 422-442 form a helical membrane-spanning segment; that stretch reads ILTIVGTIAGIVILSMIIALI. Topologically, residues 443–512 are cytoplasmic; sequence VTARSNNKTK…RHSSMPRPDY (70 aa). Residues 493 to 505 are compositionally biased toward polar residues; the sequence is RDSQMQNPYSRHS. Residues 493–512 form a disordered region; that stretch reads RDSQMQNPYSRHSSMPRPDY.

As to quaternary structure, homodimer of beta subunits. Post-translationally, cleaved into two subunits, alpha and beta, probably between the first EGF domain and the SEA domain. Beta subunit contains the cytoplasmic tail and alpha subunit the extracellular tail. The homooligomerization into dimers is dependent on intrachain disulfide bonds. In terms of processing, highly N-glycosylated. In terms of tissue distribution, highly expressed in epithelial tissues, particularly those of the gastrointestinal and respiratory tracts, such as large intestine and trachea, followed by kidney, small intestine, appendix and stomach.

It is found in the cell membrane. The protein localises to the apical cell membrane. The protein resides in the secreted. Its function is as follows. Epithelial and hemopoietic transmembrane mucin that may play a role in cell signaling. In Homo sapiens (Human), this protein is Mucin-13 (MUC13).